We begin with the raw amino-acid sequence, 460 residues long: UDP-N-acetylmuramoylalanine--D-glutamate ligase (460 aa).

123 to 129 is an ATP binding site; the sequence is GTNGKTT.

Belongs to the MurCDEF family.

It is found in the cytoplasm. The catalysed reaction is UDP-N-acetyl-alpha-D-muramoyl-L-alanine + D-glutamate + ATP = UDP-N-acetyl-alpha-D-muramoyl-L-alanyl-D-glutamate + ADP + phosphate + H(+). It functions in the pathway cell wall biogenesis; peptidoglycan biosynthesis. Its function is as follows. Cell wall formation. Catalyzes the addition of glutamate to the nucleotide precursor UDP-N-acetylmuramoyl-L-alanine (UMA). This Enterococcus hirae protein is UDP-N-acetylmuramoylalanine--D-glutamate ligase (murD).